The primary structure comprises 457 residues: Succinate-semialdehyde dehydrogenase [NADP(+)] 1 (457 aa).

209-214 (GSEPAG) contacts NADP(+). Catalysis depends on residues Glu-231 and Cys-265.

This sequence belongs to the aldehyde dehydrogenase family.

It carries out the reaction succinate semialdehyde + NAD(+) + H2O = succinate + NADH + 2 H(+). The enzyme catalyses succinate semialdehyde + NADP(+) + H2O = succinate + NADPH + 2 H(+). Its function is as follows. Catalyzes the NADP(+)-dependent oxidation of succinate semialdehyde to succinate. It is believed to be the main source of succinate semialdehyde dehydrogenase activity in Mycobacterium. This chain is Succinate-semialdehyde dehydrogenase [NADP(+)] 1 (gabD1), found in Mycobacterium bovis (strain ATCC BAA-935 / AF2122/97).